Reading from the N-terminus, the 451-residue chain is UDP-N-acetylmuramate--L-alanine ligase (451 aa).

110–116 (GTHGKTT) is an ATP binding site.

This sequence belongs to the MurCDEF family.

The protein resides in the cytoplasm. It carries out the reaction UDP-N-acetyl-alpha-D-muramate + L-alanine + ATP = UDP-N-acetyl-alpha-D-muramoyl-L-alanine + ADP + phosphate + H(+). The protein operates within cell wall biogenesis; peptidoglycan biosynthesis. Its function is as follows. Cell wall formation. The protein is UDP-N-acetylmuramate--L-alanine ligase of Francisella tularensis subsp. novicida (strain U112).